The primary structure comprises 189 residues: Fine tangled pili major subunit (189 aa).

The protein belongs to the Dps family. In terms of assembly, hexamer.

Its subcellular location is the fimbrium. May contribute to bacterial adherence, or be involved in the protection of the bacteria, or both. The polypeptide is Fine tangled pili major subunit (ftpA) (Haemophilus ducreyi (strain 35000HP / ATCC 700724)).